The primary structure comprises 76 residues: Large ribosomal subunit protein uL29 (76 aa).

It belongs to the universal ribosomal protein uL29 family.

This is Large ribosomal subunit protein uL29 from Corynebacterium aurimucosum (strain ATCC 700975 / DSM 44827 / CIP 107346 / CN-1) (Corynebacterium nigricans).